A 49-amino-acid polypeptide reads, in one-letter code: Large ribosomal subunit protein bL33B (49 aa).

The protein belongs to the bacterial ribosomal protein bL33 family.

In Bacillus anthracis, this protein is Large ribosomal subunit protein bL33B.